Consider the following 489-residue polypeptide: Putative ABC transporter ATP-binding protein TDE_0282 (489 aa).

ABC transporter domains follow at residues 2–241 (ITLR…SMKL) and 269–487 (FAVK…MQLE). ATP is bound by residues 36 to 43 (GASGCGKT) and 301 to 308 (GENGAGKT).

The protein belongs to the ABC transporter superfamily.

It localises to the cell inner membrane. Functionally, probably part of an ABC transporter complex. Responsible for energy coupling to the transport system. This chain is Putative ABC transporter ATP-binding protein TDE_0282, found in Treponema denticola (strain ATCC 35405 / DSM 14222 / CIP 103919 / JCM 8153 / KCTC 15104).